A 400-amino-acid chain; its full sequence is Involucrin (400 aa).

Disordered stretches follow at residues 1–196, 273–312, and 333–381; these read MSQQ…HLKQ, KEEVHLEQQQQETQELQQHQGAGILEQKLHQEKAQSEQQL, and KRDE…KGEV. 3 stretches are compositionally biased toward low complexity: residues 78–159, 169–186, and 279–292; these read QQQQ…QQHQ, EQQQQEPQKQELHLGQQE, and EQQQQETQELQQHQ. A compositionally biased stretch (basic and acidic residues) spans 333–344; the sequence is KRDEQLGKKEEQ. The segment covering 346–358 has biased composition (low complexity); sequence LEPSEQQEGLLEQ.

This sequence belongs to the involucrin family. Directly or indirectly cross-linked to cornifelin (CNFN). In terms of processing, substrate of transglutaminase. Specific glutamines or lysines are cross-linked to keratins, desmoplakin and to inter involucrin molecules. Keratinocytes of epidermis and other stratified squamous epithelia.

The protein localises to the cytoplasm. Part of the insoluble cornified cell envelope (CE) of stratified squamous epithelia. The chain is Involucrin (IVL) from Tupaia glis (Common tree shrew).